The chain runs to 348 residues: Aldose 1-epimerase (348 aa).

Position 80 (R80) interacts with substrate. The active-site Proton donor is H180. Position 243 (D243) interacts with substrate. E311 acts as the Proton acceptor in catalysis.

Belongs to the aldose epimerase family.

It catalyses the reaction alpha-D-glucose = beta-D-glucose. Its pathway is carbohydrate metabolism; hexose metabolism. Functionally, mutarotase converts alpha-aldose to the beta-anomer. It is active on D-glucose, L-arabinose, D-xylose, D-galactose, maltose and lactose. This chain is Aldose 1-epimerase (galM), found in Streptococcus thermophilus.